We begin with the raw amino-acid sequence, 140 residues long: Translation initiation factor 2 subunit beta (140 aa).

It belongs to the eIF-2-beta/eIF-5 family. In terms of assembly, heterotrimer composed of an alpha, a beta and a gamma chain.

In terms of biological role, eIF-2 functions in the early steps of protein synthesis by forming a ternary complex with GTP and initiator tRNA. This is Translation initiation factor 2 subunit beta (eif2b) from Pyrococcus abyssi (strain GE5 / Orsay).